The primary structure comprises 432 residues: Neuronal pentraxin-1 (432 aa).

Positions 1 to 22 (MLAGRAARTCALLALCLLGSGA) are cleaved as a signal peptide. The disordered stretch occupies residues 88–122 (RCESQSTLDSGPGEARSGGGRKQPGSGKNTMGDLS). Asparagine 154 and asparagine 193 each carry an N-linked (GlcNAc...) asparagine glycan. The Pentraxin (PTX) domain maps to 226-428 (DKFQLTFPLR…GATKWTFEAC (203 aa)). Cysteine 256 and cysteine 316 are disulfide-bonded. The Ca(2+) site is built by asparagine 280, glutamate 358, glutamine 359, aspartate 360, and glutamine 370.

As to quaternary structure, homooligomer or heterooligomer (probably pentamer) with neuronal pentraxin receptor (NPTXR). Requires Ca(2+) as cofactor. In terms of tissue distribution, expressed in brain and kidney.

It is found in the secreted. Its subcellular location is the cytoplasmic vesicle. It localises to the secretory vesicle. The protein localises to the endoplasmic reticulum. May be involved in mediating uptake of synaptic material during synapse remodeling or in mediating the synaptic clustering of AMPA glutamate receptors at a subset of excitatory synapses. In Mus musculus (Mouse), this protein is Neuronal pentraxin-1 (Nptx1).